The following is a 652-amino-acid chain: ATP-binding cassette sub-family G member 5 (652 aa).

The tract at residues 1 to 25 is disordered; it reads MGELPFLSPEGARGPHINRGSLSSL. Over 1–384 the chain is Cytoplasmic; that stretch reads MGELPFLSPE…RVTRNLMRNK (384 aa). An ABC transporter domain is found at 39–294; it reads LGVLHVSYSV…FNNCGYPCPE (256 aa). A lipid anchor (S-palmitoyl cysteine) is attached at Cys-61. Residue 87-94 coordinates ATP; that stretch reads GSSGSGKT. A helical membrane pass occupies residues 385-405; it reads QAVIMRLVQNLIMGLFLIFYL. The region spanning 389 to 646 is the ABC transmembrane type-2 domain; it reads MRLVQNLIMG…ILGIVIFKVR (258 aa). Residues 406 to 422 are Extracellular-facing; sequence LRVQNNTLKGAVQDRVG. The N-linked (GlcNAc...) asparagine glycan is linked to Asn-410. Residues 423 to 443 traverse the membrane as a helical segment; that stretch reads LLYQLVGATPYTGMLNAVNLF. The Cytoplasmic segment spans residues 444-468; sequence PMLRAVSDQESQDGLYHKWQMLLAY. The helical transmembrane segment at 469-490 threads the bilayer; it reads VLHVLPFSVIATVIFSSVCYWT. The Extracellular portion of the chain corresponds to 491–501; it reads LGLYPEVARFG. Residues 502-522 form a helical membrane-spanning segment; the sequence is YFSAALLAPHLIGEFLTLVLL. The Cytoplasmic portion of the chain corresponds to 523-529; the sequence is GIVQNPN. The chain crosses the membrane as a helical span at residues 530–550; that stretch reads IVNSIVALLSISGLLIGSGFI. Residues 551-624 lie on the Extracellular side of the membrane; the sequence is RNIQEMPIPL…PGATSRFTAN (74 aa). N-linked (GlcNAc...) asparagine glycosylation is found at Asn-585 and Asn-592. The chain crosses the membrane as a helical span at residues 625-645; sequence FLILYGFIPALVILGIVIFKV. The Cytoplasmic portion of the chain corresponds to 646–652; sequence RDYLISR.

It belongs to the ABC transporter superfamily. ABCG family. Eye pigment precursor importer (TC 3.A.1.204) subfamily. As to quaternary structure, heterodimer with ABCG8. The cofactor is Mg(2+). N-glycosylated. N-glycosylation is important for efficient export out of the endoplasmic reticulum. As to expression, detected in liver and jejunum. Detected on enterocyte villi (at protein level). Expressed in jejunum, ileum and, at lower level, in the liver.

Its subcellular location is the cell membrane. It localises to the apical cell membrane. The enzyme catalyses cholesterol(in) + ATP + H2O = cholesterol(out) + ADP + phosphate + H(+). It catalyses the reaction sitosterol(in) + ATP + H2O = sitosterol(out) + ADP + phosphate + H(+). Its activity is regulated as follows. Cholesterol transport is inhibited by vanadate and by beryllium fluoride. Its function is as follows. ABCG5 and ABCG8 form an obligate heterodimer that mediates Mg(2+)- and ATP-dependent sterol transport across the cell membrane. Plays an essential role in the selective transport of dietary plant sterols and cholesterol in and out of the enterocytes and in the selective sterol excretion by the liver into bile. Required for normal sterol homeostasis. The heterodimer with ABCG8 has ATPase activity. The protein is ATP-binding cassette sub-family G member 5 of Mus musculus (Mouse).